Consider the following 319-residue polypeptide: Probable ABC transporter permease protein MG189 homolog (319 aa).

The next 6 helical transmembrane spans lie at 41-61, 98-118, 134-154, 169-189, 229-249, and 282-302; these read VVLCFFGLMVIFPFYLMLVVA, AIWINSLVTILSIILRLFFTV, LFWFIFLAVLILPESALLIGQ, PAIILGLTMPFVASVFSGFMF, TVSILTAFAAWNSYLWPLLLL, and NLKMAAAILAILPMFIVYFLF. One can recognise an ABC transmembrane type-1 domain in the interval 99–302; sequence IWINSLVTIL…LPMFIVYFLF (204 aa).

Belongs to the binding-protein-dependent transport system permease family. MalFG subfamily.

The protein localises to the cell membrane. In terms of biological role, probably part of a binding-protein-dependent transport system. Probably responsible for the translocation of the substrate across the membrane. This Mycoplasma pneumoniae (strain ATCC 29342 / M129 / Subtype 1) (Mycoplasmoides pneumoniae) protein is Probable ABC transporter permease protein MG189 homolog.